The following is a 367-amino-acid chain: Phosphoribosylaminoimidazole-succinocarboxamide synthase (367 aa).

This sequence belongs to the SAICAR synthetase family.

It catalyses the reaction 5-amino-1-(5-phospho-D-ribosyl)imidazole-4-carboxylate + L-aspartate + ATP = (2S)-2-[5-amino-1-(5-phospho-beta-D-ribosyl)imidazole-4-carboxamido]succinate + ADP + phosphate + 2 H(+). It participates in purine metabolism; IMP biosynthesis via de novo pathway; 5-amino-1-(5-phospho-D-ribosyl)imidazole-4-carboxamide from 5-amino-1-(5-phospho-D-ribosyl)imidazole-4-carboxylate: step 1/2. This Vibrio atlanticus (strain LGP32) (Vibrio splendidus (strain Mel32)) protein is Phosphoribosylaminoimidazole-succinocarboxamide synthase.